The chain runs to 196 residues: Ribonuclease HII (196 aa).

In terms of domain architecture, RNase H type-2 spans 9-196 (GLVCGIDEAG…GPVARQLSLL (188 aa)). A divalent metal cation is bound by residues aspartate 15, glutamate 16, and aspartate 107.

It belongs to the RNase HII family. Mn(2+) serves as cofactor. It depends on Mg(2+) as a cofactor.

The protein resides in the cytoplasm. It catalyses the reaction Endonucleolytic cleavage to 5'-phosphomonoester.. Its function is as follows. Endonuclease that specifically degrades the RNA of RNA-DNA hybrids. The protein is Ribonuclease HII of Dechloromonas aromatica (strain RCB).